The following is a 252-amino-acid chain: Chitooligosaccharide deacetylase (252 aa).

Mg(2+) is bound by residues histidine 61 and histidine 125.

The protein belongs to the YdjC deacetylase family. ChbG subfamily. In terms of assembly, homodimer. It depends on Mg(2+) as a cofactor.

The protein resides in the cytoplasm. It carries out the reaction N,N'-diacetylchitobiose + H2O = N-acetyl-beta-D-glucosaminyl-(1-&gt;4)-D-glucosamine + acetate. It catalyses the reaction diacetylchitobiose-6'-phosphate + H2O = N'-monoacetylchitobiose-6'-phosphate + acetate. Its pathway is glycan degradation; chitin degradation. Functionally, involved in the degradation of chitin. ChbG is essential for growth on the acetylated chitooligosaccharides chitobiose and chitotriose but is dispensable for growth on cellobiose and chitosan dimer, the deacetylated form of chitobiose. Deacetylation of chitobiose-6-P and chitotriose-6-P is necessary for both the activation of the chb promoter by the regulatory protein ChbR and the hydrolysis of phosphorylated beta-glucosides by the phospho-beta-glucosidase ChbF. Catalyzes the removal of only one acetyl group from chitobiose-6-P to yield monoacetylchitobiose-6-P, the inducer of ChbR and the substrate of ChbF. The chain is Chitooligosaccharide deacetylase from Enterobacter sp. (strain 638).